The following is a 3032-amino-acid chain: MDQANYPNEPIVVVGSGCRFPGGVNTPSKLWELLKEPRDVQTKIPKERFDVDTFYSPDGTHPGRTNAPFAYLLQEDLRGFDASFFNIQAGEAETIDPQQRLLLETVYEAVSNAGLRIQGLQGSSTAVYVGMMTHDYETIVTRELDSIPTYSATGVAVSVASNRVSYFFDWHGPSMTIDTACSSSLAAVHLAVQQLRTGESTMAVAAGANLILGPMTFVMESKLNMLSPNGRSRMWDAAADGYARGEGVCSIVLKTLSQALRDGDSIECVIRETGINQDGRTTGITMPNHSAQEALIRATYAKAGLDITNPQERCQFFEAHGTGTPAGDPQEAEAIATAFFGHKDGTIDSDGEKDELFVGSIKTVLGHTEGTAGIAGLMKASFAVRNGVIPPNLLFEKISPRVAPFYTHLKIATEATEWPIVAPGQPRRVSVNSFGFGGTNAHAIIEEYMAPPHKPTAVVTEVTSDADACSLPLVLSSKSQRSMKATLENMLQFLETHDDVDMHDIAYTLLEKRSILPFRRAIAAHNKEVARAALEAAIADGEVVTDFRTDANDNPRVLGVFTGQGAQWPGMLKKLMVGMPFVRGILEELDNSLQTLPEKYRPTWTLYDQLMLEGDASNVRLASFSQPLCCAVQIVLVRLLAAAGIEFSAIVGHSSGEIACAFAAGFISATQAIRIAHLRGVVSAEHASSPSGQTGAMLAAGMSYDDAKELCELEAFEGRVCVAASNSPDSVTFSGDMDAIQHVEGVLEDESTFARILRVDKAYHSHHMHPCAAPYVKALLECDCAVADGQGNDSVAWFSAVHETSKQMTVQDVMPAYWKDNLVSPVLFSQAVQKAVITHRLIDVAIEIGAHPALKGPCLATIKDALAGVELPYTGCLARNVDDVDAFAGGLGYIWERFGVRSIDAEGFVQQVRPDRAVQNLSKSLPTYSWDHTRQYWAESRSTRQHLRGGAPHLLLGKLSSYSTASTFQWTNFIRPRDLEWLDGHALQGQTVFPAAGYIIMAMEAAMKVAGERAAQVQLLEILDMSINKAIVFEDENTSVELNLTAEVTSDNDADGQVTVKFVIDSCLAKESELSTSAKGQIVITLGEASPSSQLLPPPEEEYPQMNNVNIDFFYRELDLLGYDYSKDFRRLQTMRRADSKASGTLAFLPLKDELRNEPLLLHPAPLDIAFQTVIGAYSSPGDRRLRSLYVPTHVDRVTLIPSLCISAGNSGETELAFDTINTHDKGDFLSGDITVYDSTKTTLFQVDNIVFKPFSPPTASTDHRIFAKWVWGPLTPEKLLEDPATLIIARDKEDILTIERIVYFYIKSFLAQITPDDRQNADLHSQKYIEWCDQVQADARAGHHQWYQESWEEDTSVHIEQMCESNSSHPHVRLIQRVGKELISIVRGNGDPLDIMNRDGLFTEYYTNKLAFGSAIHVVQDLVSQIAHRYQSIDILEIGLGTGIATKRVLASPQLGFNSYTCTDISADVIGKAREQLSEFDGLMQFEALDINRSPAEQGFKPHSYDLIIASDVLHASSNFEEKLAHIRSLLKPGGHLVTFGVTHREPARLAFISGLFADRWTGEDETRALSASGSVDQWEHTLKRVGFSGVDSRTLDREDDLIPSVFSTHAVDATVERLYDPLSAPLKDSYPPLVVIGGESTKTERILNDMKAALPHRHIHSVKRLESVLDDPALQPKSTFVILSELDDEVFCNLEEDKFEAVKSLLFYAGRMMWLTENAWIDHPHQASTIGMLRTIKLENPDLGTHVFDVDTVENLDTKFFVEQLLRFEESDDQLLESITWTHEPEVYWCKGRAWVPRLKQDIARNDRMNSSRRPIFGNFNSSKTAIALKEARGASSSMYYLESTETCDSLEDARHAGKATVRVRYALPQAIRVGHLGYFHVVQGSILENTCEVPVVALAEKNGSILHVPRNYMHSLPDNMAEGEDSSFLLSTAAALLAETILSSAQSFGSDASILIMEPPIFCVKAILESAKTYGVQVHLATTLSDVKTIPAPWIRLHAKETDARLKHSLPTNMMAFFDLSTDRTAAGITNRLAKLLPPSCFMYSGDYLIRSTASTYKVSHVEDIPILEHSVAMAKNTVSASTVDDTEKVITATQILLPGQLSVNHNDQRFNLATVIDWKENEVSARICPIDSGNLFSNKKTYLLVGLTGDLGRSLCRWMILHGARHVVLTSRNPRLDPKWIANMEALGGDITVLSMDVANEDSVDAGLGKLVDMKLPPVAGIAFGPLVLQDVMLKNMDHQMMDMVLKPKVQGARILHERFSEQTGSKALDFFIMFSSIVAVIGNPGQSNYGAANAYLQALAQQRCARGLAGSTIDIGAVYGVGFVTRAEMEEDFDAIRFMFDSVEEHELHTLFAEAVVSDQRARQQPQRKTVIDMADLELTTGIPDLDPALQDRIIYFNDPRFGNFKIPGQRGDGGDNGSGSKGSIADQLKQATTLDQVRQIVIDGLSEKLRVTLQVSDGESVDPTIPLIDQGVDSLGAVTVGSWFSKQLYLDLPLLRVLGGASVADLADDAATRLPATSIPLLLQIGDSTGTSDSGASPTPTDSHDEASSATSTDASSAEEDEEQEDDNEQGGRKILRRERLSLGQEYSWRQQQMVKDHTIFNNTIGMFMKGTIDLDRLRRALKASLRRHEIFRTCFVTGDDYSSDLNGPVQVVLKNPENRVHFVQVNNAAEAEEEYRKLEKTNYSISTGDTLRLVDFYWGTDDHLLVIGYHRLVGDGSTTENLFNEIGQIYSGVKMQRPSTQFSDLAVQQRENLENGRMGDDIAFWKSMHSKVSSSAPTVLPIMNLINDPAANSEQQQIQPFTWQQYEAIARLDPMVAFRIKERSRKHKATPMQFYLAAYHVLLARLTGSKDITIGLAETNRSTMEEISAMGFFANVLPLRFDEFVGSKTFGEHLVATKDSVREAMQHARVPYGVILDCLGLNLPTSGEEPKTQTHAPLFQAVFDYKQGQAESGSIGNAKMTSVLASRERTPYDIVLEMWDDPTKDPLIHVKLQSSLYGPEHAQAFVDHFSSILTMFSMNPALKLA.

Positions Asn-8–Glu-447 constitute a Ketosynthase family 3 (KS3) domain. Catalysis depends on for beta-ketoacyl synthase activity residues Cys-181, His-320, and His-367. The acyl and malonyl transferase stretch occupies residues Val-560–Arg-901. Ser-654 serves as the catalytic For malonyltransferase activity. The segment at His-953–Ala-1089 is N-terminal hotdog fold. In terms of domain architecture, PKS/mFAS DH spans His-953 to Ser-1261. His-985 serves as the catalytic Proton acceptor; for dehydratase activity. The tract at residues His-985 to Gly-997 is dehydratase-like. The segment at Met-1106–Ser-1261 is C-terminal hotdog fold. Catalysis depends on Asp-1168, which acts as the Proton donor; for dehydratase activity. The segment at Tyr-1506–Thr-1544 is methyltransferase. One can recognise a Carrier domain in the interval Asp-2441–Leu-2520. Ser-2480 is subject to O-(pantetheine 4'-phosphoryl)serine. Residues Ile-2531–Lys-2580 are disordered. A compositionally biased stretch (low complexity) spans Gly-2532–Thr-2547. Residues Ser-2563–Glu-2575 are compositionally biased toward acidic residues. Positions Arg-2586–Phe-2946 are peptide synthetase elongation.

Pantetheine 4'-phosphate serves as cofactor.

It catalyses the reaction holo-[compactin nonaketide synthase] + 9 malonyl-CoA + 11 NADPH + 20 H(+) = dihydro-ML-236C-[compactin nonaketide synthase] + 9 CO2 + 11 NADP(+) + 9 CoA + 6 H2O. It participates in polyketide biosynthesis. In terms of biological role, nonaketide synthase; part of the gene cluster that mediates the biosynthesis of compactin, also known as mevastatin or ML-236B, and which acts as a potent competitive inhibitor of HMG-CoA reductase. Compactin biosynthesis is performed in two stages. The first stage is catalyzed by the nonaketide synthase mlcA, which belongs to type I polyketide synthases and catalyzes the iterative nine-step formation of the polyketide. This PKS stage is completed by the action of dehydrogenase mlcG, which catalyzes the NADPH-dependent reduction of the unsaturated tetra-, penta- and heptaketide intermediates that arise during the mlcA-mediated biosynthesis of the nonaketide chain and leads to dihydro-ML-236C carboxylate. Covalently bound dihydro-ML-236C carboxylate is released from mlcA by the mlcF esterase. Conversion of dihydro-ML-236C carboxylate into ML-236A carboxylate is subsequently performed with the participation of molecular oxygen and P450 monoogygenase mlcC. Finally, mlcH performs the conversion of ML-236A carboxylate to ML-236B/compactin carboxylate through the addition of the side-chain diketide moiety produced by the diketide synthase mlcB. The protein is Compactin nonaketide synthase, polyketide synthase component of Penicillium citrinum.